A 524-amino-acid polypeptide reads, in one-letter code: Glutamyl-tRNA(Gln) amidotransferase subunit A (524 aa).

Residues Lys-109 and Ser-184 each act as charge relay system in the active site. Catalysis depends on Ser-208, which acts as the Acyl-ester intermediate.

It belongs to the amidase family. GatA subfamily. In terms of assembly, heterotrimer of A, B and C subunits.

The catalysed reaction is L-glutamyl-tRNA(Gln) + L-glutamine + ATP + H2O = L-glutaminyl-tRNA(Gln) + L-glutamate + ADP + phosphate + H(+). Allows the formation of correctly charged Gln-tRNA(Gln) through the transamidation of misacylated Glu-tRNA(Gln) in organisms which lack glutaminyl-tRNA synthetase. The reaction takes place in the presence of glutamine and ATP through an activated gamma-phospho-Glu-tRNA(Gln). This chain is Glutamyl-tRNA(Gln) amidotransferase subunit A, found in Tropheryma whipplei (strain Twist) (Whipple's bacillus).